Consider the following 272-residue polypeptide: Glutamate racemase (272 aa).

Residues 16–17 and 48–49 each bind substrate; these read DS and YG. Residue cysteine 79 is the Proton donor/acceptor of the active site. 80–81 contributes to the substrate binding site; that stretch reads NT. The active-site Proton donor/acceptor is cysteine 191. 192-193 serves as a coordination point for substrate; that stretch reads TH.

Belongs to the aspartate/glutamate racemases family.

It carries out the reaction L-glutamate = D-glutamate. It functions in the pathway cell wall biogenesis; peptidoglycan biosynthesis. In terms of biological role, provides the (R)-glutamate required for cell wall biosynthesis. This chain is Glutamate racemase, found in Chlorobaculum tepidum (strain ATCC 49652 / DSM 12025 / NBRC 103806 / TLS) (Chlorobium tepidum).